The following is a 186-amino-acid chain: GPI-anchored hemophore ARB_02741 (186 aa).

The first 18 residues, 1–18, serve as a signal peptide directing secretion; it reads MKFSQAVIALAAATVVSA. Positions 19–108 constitute a CFEM domain; the sequence is QLPDVPQCSL…SSKPSEPSTS (90 aa). Disulfide bonds link Cys-26/Cys-67, Cys-30/Cys-62, Cys-40/Cys-48, and Cys-50/Cys-83. Asp-45 is a heme binding site. Residues 89–159 are disordered; sequence PVSIPPVEES…NTGVPTQSTP (71 aa). Positions 96–131 are enriched in low complexity; sequence EESSSKPSEPSTSEAPTASPTESTPAPTTPAPTGTG. A compositionally biased stretch (gly residues) spans 132 to 144; that stretch reads SPSGTGAPGGPSG. A compositionally biased stretch (polar residues) spans 148-159; the sequence is FTNTGVPTQSTP. Gly-163 carries the GPI-anchor amidated glycine lipid modification. The propeptide at 164–186 is removed in mature form; it reads AASGLSANIGGMGAAILAIAAYL.

It belongs to the RBT5 family. In terms of processing, the GPI-anchor is attached to the protein in the endoplasmic reticulum and serves to target the protein to the cell surface. There, the glucosamine-inositol phospholipid moiety is cleaved off and the GPI-modified mannoprotein is covalently attached via its lipidless GPI glycan remnant to the 1,6-beta-glucan of the outer cell wall layer.

The protein localises to the secreted. The protein resides in the cell wall. Its subcellular location is the cell membrane. In terms of biological role, GPI-anchored cell wall protein involved in stabilizing the cell wall. The chain is GPI-anchored hemophore ARB_02741 from Arthroderma benhamiae (strain ATCC MYA-4681 / CBS 112371) (Trichophyton mentagrophytes).